The sequence spans 82 residues: Large ribosomal subunit protein bL27 (82 aa).

The disordered stretch occupies residues 1-21 (MAHKKGASSSRNGRDSNAKRL).

The protein belongs to the bacterial ribosomal protein bL27 family.

The polypeptide is Large ribosomal subunit protein bL27 (Tropheryma whipplei (strain Twist) (Whipple's bacillus)).